The chain runs to 1187 residues: uncharacterized protein (1187 aa).

Residues 38 to 57 show a composition bias toward polar residues; that stretch reads KNNQDIPTSNTNISPKPISQ. Disordered regions lie at residues 38 to 127, 189 to 215, 248 to 287, 358 to 415, 443 to 490, 536 to 689, 752 to 840, and 1079 to 1187; these read KNNQ…NSPT, ISRSSSSSSSSSSSSSGKSNENSIHLN, TQPPQPYPQQIQPPQEQLQQHQSQAPHSPLPQPQPPSQLQ, NNNS…NSNS, FPNN…INNN, QFPF…SSLN, SINN…NKSI, and HNNN…NLQK. Composition is skewed to low complexity over residues 71 to 84, 104 to 124, 190 to 215, and 248 to 274; these read KPIVPSTSSTSTLI, PSSSSSSSSSSLSSSSTSIPN, SRSSSSSSSSSSSSSGKSNENSIHLN, and TQPPQPYPQQIQPPQEQLQQHQSQAPH. Over residues 443–455 the composition is skewed to polar residues; the sequence is FPNNTDENYPSDH. Low complexity-rich tracts occupy residues 458–490, 543–570, 585–653, 662–689, 752–790, and 797–809; these read NDNNNDKNNNTNNNIIINDDNNNNPNNNNINNN, TTESGFSSTSTTPSSTSVPSSLSNSSSA, INNL…SNIN, PNSPISNYSSMSSSSSPNSFTSSTSSLN, SINNNNNNDKNNDIDNSNENLTTTTTTTTTTTTTTTTNN, and NYKINNYNNNIDN. Residues 815-832 show a composition bias toward acidic residues; sequence NDDDNDDDDDDDVDDNDD. Low complexity-rich tracts occupy residues 1079–1149 and 1156–1174; these read HNNN…PSNN and KNNNNNNNNNNNNNNNNTN.

This is an uncharacterized protein from Dictyostelium discoideum (Social amoeba).